Here is a 241-residue protein sequence, read N- to C-terminus: Chaperone protein HifB (241 aa).

The N-terminal stretch at 1-27 (MGKTMFKKTLLFFTALFFTALCAFSAN) is a signal peptide.

This sequence belongs to the periplasmic pilus chaperone family.

It is found in the periplasm. Its function is as follows. Mediates assembly of pili by forming soluble multimeric complexes with pili subunits as an intermediate step in the assembly process. This protein is involved in type B pili (HifA) assembly. The protein is Chaperone protein HifB (hifB) of Haemophilus influenzae.